The primary structure comprises 137 residues: MKLGTAIPWALLLSTATLVSTARINGPDECGRVIKDTSGSISNTDRQKNLCTWTILMKPDQKVRMAIPYLNLACGKEYVEVFDGLLSGPSYGKLCAGAAIVFLSTANTMTIKYNRISGNSSSPFLIYFYGSSPGSEY.

A signal peptide spans M1–T21. Intrachain disulfides connect C30/C51 and C74/C95. Positions C30 to S131 constitute a CUB domain. N-linked (GlcNAc...) (complex) asparagine glycosylation occurs at N119.

As to quaternary structure, monomer or heterodimer with PSP-I (depending on the type of glycosylation of PSP-I). As to expression, seminal plasma or sperm.

Its subcellular location is the secreted. The sequence is that of Major seminal plasma glycoprotein PSP-II from Sus scrofa (Pig).